The sequence spans 584 residues: ATP-dependent lipid A-core flippase (584 aa).

Transmembrane regions (helical) follow at residues 18-38 (LWPI…TLIL), 65-85 (VFVW…FSGF), 155-175 (IIGL…ILVL), 252-272 (IFDP…LYAA), and 277-297 (VMEM…IVLM). The 283-residue stretch at 30–312 (VVASITLILN…LTNVSAQFQR (283 aa)) folds into the ABC transmembrane type-1 domain. The 237-residue stretch at 344 to 580 (IIFDDVTFFY…QGIYAQLYKL (237 aa)) folds into the ABC transporter domain. An ATP-binding site is contributed by 378–385 (GRSGSGKS).

Belongs to the ABC transporter superfamily. Lipid exporter (TC 3.A.1.106) family. Homodimer.

The protein resides in the cell inner membrane. It carries out the reaction ATP + H2O + lipid A-core oligosaccharideSide 1 = ADP + phosphate + lipid A-core oligosaccharideSide 2.. In terms of biological role, involved in lipopolysaccharide (LPS) biosynthesis. Translocates lipid A-core from the inner to the outer leaflet of the inner membrane. Transmembrane domains (TMD) form a pore in the inner membrane and the ATP-binding domain (NBD) is responsible for energy generation. This is ATP-dependent lipid A-core flippase from Blochmanniella pennsylvanica (strain BPEN).